A 1685-amino-acid chain; its full sequence is PHD and RING finger domain-containing protein 1 (1685 aa).

Positions 1-82 (MDDDNLDELV…GSEDSEDGIE (82 aa)) are disordered. Over residues 41-81 (DSEDDTGSEQDDDTDGEETEGLSEEEDPEDRSGSEDSEDGI) the composition is skewed to acidic residues. An RING-type; degenerate zinc finger spans residues 109 to 150 (CPICLNAFRDQAVGTPETCAHYFCLDCIIEWSRNANSCPVDR). The PHD-type zinc-finger motif lies at 188–238 (PTFCEVCGRSDREDRLLLCDGCDAGYHMECLDPPLQEVPVDEWFCPECAVP). 5 disordered regions span residues 333–390 (PLTP…KLKN), 449–483 (DSNGEQSADPPSPLSAKRRVLSRSALQSHQPVARP), 537–590 (SAKR…GLSC), 606–777 (TPVR…GSSF), and 809–860 (KVQR…LLPS). Position 335 is a phosphothreonine (Thr335). 2 stretches are compositionally biased toward basic residues: residues 339–364 (PAKRKRKAGRRKKVLGRKKTRSRSSV) and 372–387 (RAKKRQHRVRRTKGRK). Ser450 and Ser460 each carry phosphoserine. Polar residues-rich tracts occupy residues 606–625 (TPVRSDSSVTPRSGLSGNLS) and 637–662 (SPRLNGSNVRVGSASTKTMTHSNFPS). A compositionally biased stretch (basic and acidic residues) spans 671–682 (QKTDPRRPDFSK). Polar residues-rich tracts occupy residues 694–709 (SNSTQDQAPASGQTVE) and 737–751 (SSRGPQETGSHTSGS). 9 positions are modified to phosphoserine: Ser817, Ser848, Ser849, Ser867, Ser870, Ser922, Ser948, Ser984, and Ser1002. Positions 835-860 (PFDPTGSDSSPPSSSPESLGSGLLPS) are enriched in low complexity. Disordered regions lie at residues 892–1229 (GTEM…VSEV), 1290–1355 (QLDD…APSD), and 1369–1390 (TTLSTPGVLPMGKDSPLLSGRG). Over residues 922-934 (SDLEQEGLGEIEP) the composition is skewed to acidic residues. Residues 1001–1010 (SSRSRSTSSS) show a composition bias toward low complexity. 2 stretches are compositionally biased toward basic residues: residues 1011 to 1031 (RSRKKTKKKKKVAREHQRTRS) and 1054 to 1064 (KRHRAKTKSRR). Basic and acidic residues predominate over residues 1065–1075 (SSSDRASSQDR). 2 stretches are compositionally biased toward basic residues: residues 1089-1102 (GPWGHGRCWRKSRS) and 1117-1129 (SRRRKRRHSGSRS). Basic and acidic residues-rich tracts occupy residues 1130-1143 (RGRDGSPHSSLERD) and 1151-1165 (RSRERMDKKESMTRS). 2 positions are modified to phosphoserine: Ser1135 and Ser1139. Residues 1181–1191 (RTRRPHSREKH) show a composition bias toward basic residues. Over residues 1192–1201 (PHSPEKKGAV) the composition is skewed to basic and acidic residues. Ser1205 is modified (phosphoserine). Positions 1292–1305 (DDMSSPPSPESTDS) are enriched in low complexity. Residues Ser1372 and Ser1383 each carry the phosphoserine modification. Thr1416 is subject to Phosphothreonine. Disordered stretches follow at residues 1421-1448 (EAEASTPALDRDPRTPLQRPQRPQEGDW), 1466-1501 (LPPPIHVLQESGLPDADPSQPPGVPRAEGPPAVGTL), and 1569-1591 (LAVPTTNNSEERTATPKTAAEKT). Residues 1577 to 1591 (SEERTATPKTAAEKT) are compositionally biased toward basic and acidic residues. The stretch at 1589–1615 (EKTKKEEYMKKLHMQERAVEEVKLAIK) forms a coiled coil.

Interacts with POLR2A (via the C-terminal domain).

The protein is PHD and RING finger domain-containing protein 1 of Rattus norvegicus (Rat).